Reading from the N-terminus, the 132-residue chain is Small ribosomal subunit protein uS8 (132 aa).

It belongs to the universal ribosomal protein uS8 family. In terms of assembly, part of the 30S ribosomal subunit. Contacts proteins S5 and S12.

Functionally, one of the primary rRNA binding proteins, it binds directly to 16S rRNA central domain where it helps coordinate assembly of the platform of the 30S subunit. The protein is Small ribosomal subunit protein uS8 of Streptococcus pyogenes serotype M1.